The chain runs to 627 residues: Translation factor GUF1, mitochondrial (627 aa).

The transit peptide at 1 to 16 directs the protein to the mitochondrion; sequence MSLAWSAGRAWSRQSY. One can recognise a tr-type G domain in the interval 40 to 221; the sequence is ERYRNFCIVA…AVIERIPHPV (182 aa). Residues 49-56, 114-118, and 168-171 contribute to the GTP site; these read AHIDHGKS, DTPGH, and NKID.

This sequence belongs to the TRAFAC class translation factor GTPase superfamily. Classic translation factor GTPase family. LepA subfamily.

It localises to the mitochondrion inner membrane. The catalysed reaction is GTP + H2O = GDP + phosphate + H(+). Its function is as follows. Promotes mitochondrial protein synthesis. May act as a fidelity factor of the translation reaction, by catalyzing a one-codon backward translocation of tRNAs on improperly translocated ribosomes. Binds to mitochondrial ribosomes in a GTP-dependent manner. The protein is Translation factor GUF1, mitochondrial of Fusarium vanettenii (strain ATCC MYA-4622 / CBS 123669 / FGSC 9596 / NRRL 45880 / 77-13-4) (Fusarium solani subsp. pisi).